A 1017-amino-acid chain; its full sequence is Protein HIRA (1017 aa).

WD repeat units lie at residues 11–53 (HNGK…QEDD) and 68–107 (NHLA…GPST). Position 111 is a phosphoserine (serine 111). WD repeat units lie at residues 129–168 (NHSG…EILA), 172–211 (GHSG…LETS), 220–263 (GGTT…TNMD), 266–322 (GHRK…PLVV), and 326–367 (LFDK…DPLS). Residues 421–479 (REMGSATSVAGVVNGESLEDIRKNLLKKQVETRTADGRRRITPLCIAQLDTGDFSTAFF) are interaction with ASF1A. The tract at residues 421–729 (REMGSATSVA…RLKCNREGKE (309 aa)) is interaction with CCNA1. The required for repression of histone gene transcription stretch occupies residues 439 to 475 (EDIRKNLLKKQVETRTADGRRRITPLCIAQLDTGDFS). Residues 494–509 (SSHSSPQLLPLDSSTP) show a composition bias toward low complexity. A disordered region spans residues 494–555 (SSHSSPQLLP…AALSPSVLTT (62 aa)). Polar residues predominate over residues 536–555 (KDSMNATSTPAALSPSVLTT). Phosphoserine is present on serine 549. At threonine 555 the chain carries Phosphothreonine; by CDK2. At serine 557 the chain carries Phosphoserine. 2 disordered regions span residues 570 to 589 (TERS…TPTA) and 604 to 625 (PRDL…KASS). Residue threonine 576 is modified to Phosphothreonine. Position 584 is a phosphoserine (serine 584). Threonine 586 carries the phosphothreonine modification. Positions 593–826 (LKEQNLVKEL…LAGSDMTVSQ (234 aa)) are interaction with histone H2B. Interaction with PAX3 stretches follow at residues 594–739 (KEQN…SRIL) and 740–828 (TAAG…SQIL). A compositionally biased stretch (basic and acidic residues) spans 604–619 (PRDLLESSSDSDEKVP). Serine 610, serine 611, serine 612, serine 614, serine 661, serine 675, and serine 687 each carry phosphoserine. Positions 738 to 1017 (ILTAAGSCDV…QEQLDILRDK (280 aa)) are interaction with histone H4.

It belongs to the WD repeat HIR1 family. Interacts with histone H3-3B, PAX3 and PAX7. Interacts with histone H3.Y. Interacts with CCNA1, HIRIP3, NFU1/HIRIP5 and histone H2B. Part of a complex which includes ASF1A, CABIN1, histone H3.3, histone H4 and UBN1. In terms of processing, sumoylated. Phosphorylated by CDK2/CCNA1 and CDK2/CCNE1 on Thr-555 in vitro. Also phosphorylated on Thr-555 and Ser-687 in vivo. As to expression, expressed at high levels in kidney, pancreas and skeletal muscle and at lower levels in brain, heart, liver, lung, and placenta.

The protein localises to the nucleus. It localises to the PML body. Functionally, cooperates with ASF1A to promote replication-independent chromatin assembly. Required for the periodic repression of histone gene transcription during the cell cycle. Required for the formation of senescence-associated heterochromatin foci (SAHF) and efficient senescence-associated cell cycle exit. This chain is Protein HIRA (HIRA), found in Homo sapiens (Human).